The chain runs to 336 residues: Dihydroorotate dehydrogenase (quinone) (336 aa).

FMN contacts are provided by residues 62–66 (AGLDK) and T86. K66 is a binding site for substrate. 111–115 (NRMGF) lines the substrate pocket. Residues N139 and N172 each coordinate FMN. N172 serves as a coordination point for substrate. S175 functions as the Nucleophile in the catalytic mechanism. N177 contributes to the substrate binding site. FMN-binding residues include K217 and T245. 246–247 (NT) provides a ligand contact to substrate. Residues G268, G297, and 318-319 (YS) each bind FMN.

It belongs to the dihydroorotate dehydrogenase family. Type 2 subfamily. As to quaternary structure, monomer. Requires FMN as cofactor.

Its subcellular location is the cell membrane. The enzyme catalyses (S)-dihydroorotate + a quinone = orotate + a quinol. It functions in the pathway pyrimidine metabolism; UMP biosynthesis via de novo pathway; orotate from (S)-dihydroorotate (quinone route): step 1/1. Its function is as follows. Catalyzes the conversion of dihydroorotate to orotate with quinone as electron acceptor. The protein is Dihydroorotate dehydrogenase (quinone) of Klebsiella pneumoniae subsp. pneumoniae (strain ATCC 700721 / MGH 78578).